The following is a 206-amino-acid chain: Uridine kinase (206 aa).

11–18 is a binding site for ATP; the sequence is GGTGSGKS.

This sequence belongs to the uridine kinase family.

Its subcellular location is the cytoplasm. It catalyses the reaction uridine + ATP = UMP + ADP + H(+). The enzyme catalyses cytidine + ATP = CMP + ADP + H(+). It participates in pyrimidine metabolism; CTP biosynthesis via salvage pathway; CTP from cytidine: step 1/3. It functions in the pathway pyrimidine metabolism; UMP biosynthesis via salvage pathway; UMP from uridine: step 1/1. This Clostridium botulinum (strain Langeland / NCTC 10281 / Type F) protein is Uridine kinase.